The primary structure comprises 950 residues: Protocadherin alpha-13 (950 aa).

Residues 1 to 29 (MLSSWQGGPRPRQLLLWLLILAAWETGSG) form the signal peptide. Residues 30–697 (QLHYSVPEEA…GPEAALVDVN (668 aa)) are Extracellular-facing. 6 consecutive Cadherin domains span residues 34 to 133 (SVPE…PPIF), 134 to 242 (PESK…APEF), 243 to 350 (YQSV…APEV), 351 to 455 (TITS…APAF), 456 to 565 (AQPE…APAL), and 581 to 678 (MPRS…APQA). 2 N-linked (GlcNAc...) asparagine glycosylation sites follow: Asn-257 and Asn-265. A glycan (N-linked (GlcNAc...) asparagine) is linked at Asn-548. A helical membrane pass occupies residues 698-718 (VYLIIAICAVSSLLVLTLLLY). Over 719–950 (TALRCSAPPT…GNSTTDNSDQ (232 aa)) the chain is Cytoplasmic. 6 PXXP repeats span residues 734 to 737 (PGKP), 774 to 777 (PSLP), 799 to 802 (PRQP), 832 to 835 (PGGP), 873 to 876 (PGNP), and 891 to 894 (PGSP). The segment at 734-894 (PGKPTLVCSS…PDKFIIPGSP (161 aa)) is 6 X 4 AA repeats of P-X-X-P. Disordered regions lie at residues 774 to 808 (PSLP…DWRY) and 827 to 950 (ILRA…NSDQ). Basic and acidic residues predominate over residues 787–800 (GQREEDSEGLKEPR). Residues 909–923 (DKSDFITFGKKEETK) show a composition bias toward basic and acidic residues.

The protein resides in the cell membrane. Its function is as follows. Potential calcium-dependent cell-adhesion protein. May be involved in the establishment and maintenance of specific neuronal connections in the brain. The protein is Protocadherin alpha-13 (PCDHA13) of Pan troglodytes (Chimpanzee).